The primary structure comprises 172 residues: Small integral membrane protein 23 (172 aa).

Residues 1–36 are Cytoplasmic-facing; it reads MATQQVDSRRQVAAEQVAAQLLERRRGSHCDDEKQT. The chain crosses the membrane as a helical; Signal-anchor for type II membrane protein span at residues 37–53; sequence LLALLILVLYLSTEIWG. The Extracellular segment spans residues 54–172; it reads SSWEVSERIR…LEISLSGAEL (119 aa). Residues 96–128 adopt a coiled-coil conformation; that stretch reads LKEKLHVFSEKLEEEVQQLEQLAWDLELWLDAL.

It localises to the cell membrane. This Homo sapiens (Human) protein is Small integral membrane protein 23 (SMIM23).